We begin with the raw amino-acid sequence, 627 residues long: uncharacterized protein (627 aa).

The Extracellular segment spans residues 1–32; that stretch reads MVDDSNYLTPHETALAVVATAMKKARLQLDTL. Residues 33-53 traverse the membrane as a helical segment; that stretch reads LINSILGGVLFSSGSFLLVAV. The Cytoplasmic segment spans residues 54-66; it reads YSEDPDIVARNPG. A helical membrane pass occupies residues 67-87; that stretch reads IVNLITGVNFAMGLFYVVMMG. Residues 88-113 are Extracellular-facing; the sequence is ADLFNSNILFFSVGVLRKAVTIYDLM. The chain crosses the membrane as a helical span at residues 114 to 134; the sequence is ISWVVSWLGNIAGSLFVSYLF. Residues 135–165 lie on the Cytoplasmic side of the membrane; it reads GHLSGISSQKLWIIGSRQIIEQKVSYSFVQT. The chain crosses the membrane as a helical span at residues 166 to 186; sequence FLKGIACNFFVCLAIYLQLMA. Topologically, residues 187-192 are extracellular; the sequence is KPIHVK. Residues 193–213 form a helical membrane-spanning segment; sequence FILMSFPIIDFIGIGFTHVVG. The Cytoplasmic portion of the chain corresponds to 214-218; that stretch reads DMSAS. The chain crosses the membrane as a helical span at residues 219–239; it reads FIAMLNGANVSVGKYIWKLLI. Topologically, residues 240–245 are extracellular; the sequence is PASLGN. Residues 246-266 form a helical membrane-spanning segment; the sequence is IVGGLFFSAVVPFYLHLVVVE. Topologically, residues 267–627 are cytoplasmic; the sequence is RDRKRLSLPE…FYNRHTSPQL (361 aa). At T305 the chain carries Phosphothreonine. The segment at 512–537 is disordered; it reads PPILPRTTQDTFPHNAPASSPAYTDD. Residues 517–533 show a composition bias toward polar residues; sequence RTTQDTFPHNAPASSPA. At S546 the chain carries Phosphoserine. At T588 the chain carries Phosphothreonine. The span at 605-614 shows a compositional bias: basic and acidic residues; it reads STTRRQKITE. The disordered stretch occupies residues 605 to 627; that stretch reads STTRRQKITEPKNFYNRHTSPQL.

This sequence belongs to the FNT transporter (TC 1.A.16) family.

The protein localises to the membrane. This is an uncharacterized protein from Saccharomyces cerevisiae (strain ATCC 204508 / S288c) (Baker's yeast).